We begin with the raw amino-acid sequence, 159 residues long: MQANSRAFFLLIAVIAFGLVGYALYLQHVEGLQPCPLCVLQRFAFVGIGVFSLLAALSSATRLLWHGLGMLSGLGGIFVAGYHVSLLLNPKASCGIDPIENWVNALPTAKWLPQVFESDGLCTAPLPPVLGVSIPLWSLIWMVILALTLVVAMIRRERR.

Residues 1–8 are Cytoplasmic-facing; sequence MQANSRAF. Residues 9–25 form a helical membrane-spanning segment; that stretch reads FLLIAVIAFGLVGYALY. Residues 26–43 are Periplasmic-facing; that stretch reads LQHVEGLQPCPLCVLQRF. A disulfide bond links cysteine 35 and cysteine 38. The chain crosses the membrane as a helical span at residues 44 to 57; sequence AFVGIGVFSLLAAL. At 58-63 the chain is on the cytoplasmic side; the sequence is SSATRL. A helical transmembrane segment spans residues 64 to 81; sequence LWHGLGMLSGLGGIFVAG. At 82–136 the chain is on the periplasmic side; that stretch reads YHVSLLLNPKASCGIDPIENWVNALPTAKWLPQVFESDGLCTAPLPPVLGVSIPL. A disulfide bridge links cysteine 94 with cysteine 122. Residues 137-155 form a helical membrane-spanning segment; the sequence is WSLIWMVILALTLVVAMIR. Over 156–159 the chain is Cytoplasmic; sequence RERR.

Belongs to the DsbB family.

Its subcellular location is the cell inner membrane. Functionally, required for disulfide bond formation in some periplasmic proteins. Acts by oxidizing the DsbA protein. The sequence is that of Disulfide bond formation protein B from Ralstonia nicotianae (strain ATCC BAA-1114 / GMI1000) (Ralstonia solanacearum).